The primary structure comprises 312 residues: Fasciclin-like arabinogalactan protein elcF (312 aa).

The signal sequence occupies residues 1–16 (MKLFTLLLPALTSAHS). FAS1 domains are found at residues 17-160 (LSTL…NASM) and 162-289 (LPHN…DKVL). 5 N-linked (GlcNAc...) asparagine glycosylation sites follow: Asn48, Asn68, Asn113, Asn157, and Asn165.

The protein belongs to the fasciclin-like AGP family.

Its pathway is secondary metabolite biosynthesis. In terms of biological role, fasciclin-like arabinogalactan protein; part of the gene cluster that mediates the biosynthesis of elsinochrome C, a perelyenequinone phytotoxin structurally similar to cercosporin. The first step of elsinochrome C biosynthesis is performed by the polyketide synthase elcA which catalyzes the formation of nor-toralactone. The starter unit acyltransferase (SAT) domain of elcA initiates polyketide extension by the selective utilization of acetyl-CoA, which is elongated to the heptaketide in the beta-ketoacyl synthase (KS) domain by successive condensations with six malonyl units introduced by the malonyl acyltransferase (MAT) domain. The product template (PT) domain catalyzes C4-C9 and C2-C11 aldol cyclizations and dehydrations to a trihydroxynaphthalene, which is thought to be delivered to the thioesterase (TE) domain for product release. The bifunctional enzyme elcB then methylates nor-toralactone to toralactone before conducting an unusual oxidative aromatic ring opening. The next step in perylenequinone biosynthesis is an O-methylation at the nascent OH-6 of the elcB product performed by the O-methyltransferase elcD. The oxidative coupling of the two monomeric naphthol units in perylenequinone biosynthesis is catalyzed by the FAD-dependent monooxygenase elcE and the multicopper oxidase elcG. ElcG might catalyze the first intermolecular coupling in a regio- and stereo-selective manner via a phenol radical coupling mechanism and the elcE could forge the second C-C bond intramolecularly via a hydride transfer mechanism. The fasciclin domain-containing protein elcF might also play a role duting this step. The last piece of the puzzle in the biosynthesis of elsinochrome C is the additional annulation by enolate coupling to afford the dihydrobenzo(ghi)perylenequinone system, catalyzed by the FAD-dependent monooxygenase elcH. The chain is Fasciclin-like arabinogalactan protein elcF from Phaeosphaeria nodorum (strain SN15 / ATCC MYA-4574 / FGSC 10173) (Glume blotch fungus).